Here is a 254-residue protein sequence, read N- to C-terminus: Hydroxyacylglutathione hydrolase (254 aa).

Residues H52, H54, D56, H57, H109, D126, and H164 each contribute to the Zn(2+) site.

The protein belongs to the metallo-beta-lactamase superfamily. Glyoxalase II family. Monomer. It depends on Zn(2+) as a cofactor.

The catalysed reaction is an S-(2-hydroxyacyl)glutathione + H2O = a 2-hydroxy carboxylate + glutathione + H(+). It participates in secondary metabolite metabolism; methylglyoxal degradation; (R)-lactate from methylglyoxal: step 2/2. In terms of biological role, thiolesterase that catalyzes the hydrolysis of S-D-lactoyl-glutathione to form glutathione and D-lactic acid. The chain is Hydroxyacylglutathione hydrolase from Stenotrophomonas maltophilia (strain R551-3).